The primary structure comprises 1220 residues: MAAREQANSVRRSGFFNPFIGKRPFFRPGSGQTAETERPRPPQHSYCTEVGSFKFIAPRCLDEEAPADQRRGVHVGTLERPPKVYCDGSEYDVLNFASGGCWPRRIRVWNGQDFRGDGFNPRFERFHVYDIVETSESASHDDPSRFAELSRPSGSVVTLLGMSECGKRVAVHVYGVRHYFYMAKAEVDSACGITTEAELVRAMVDCAHSSALSAALGNGNGGKQSGGSGGGWWGGKHVSADCFKVETVCHTTLYYFGSKPALYYRVSASSSRLGGFICDNFHPEITKFEGSVDVTTRLLLDNENFTSFGWYRLRPGTHGERVQLRPVERHVTSSDVEINCTPDNLEPIPDEAAWPDYKLMCFDIECKAGTGNEMAFPVATNQEDLVIQISCLLYSLATQNHEHTLLFSLGSCDISEEYSFACVQRGEPRPTVLEFDSEYELLVAFLTFLKQYSPEFATGYNIVNFDWAYIVNKVTSVYNIKLDGYGKFNKGGLFKVWDIATNHFQKKSKVKINGLISLDMYSVATEKLKLPSYKLDAVVGDVLGEHKIDLPYKEIPSYYAGGPDRRGVIGEYCIQDSRLVGKLFFKYLPHLELSAVAKLARITLTRVIFDGQQIRVYTCLLKLARERNFILPDNRRRFDSQADAASETSELAMDSQSHAFDSTDEPDGVDGTPDAAGSGATSENGGGKPGVGRAVGYQGAKVLDPVSGFHVDPVVVFDFASLYPSIIQAHNLCFTTLALDEVDLAGLQPSVNYSTFEVGDQKLFFVHAHIRESLLGILLRDWLAMRKAVRARIPTSTPEEAVLLDKQQSAIKVICNSVYGFTGVANGLLPCLRIAATVTTIGRDMLLKTRDYVHSRWATRELLEDNFPGAIGFRNHKPYSVRVIYGDTDSVFIKFVGLTYEGVSELGDAMSRQISADLFRAPIKLECEKTFQRLLLITKKKYIGVINGGKMLMKGVDLVRKNNCSFINLYARHLVDLLLYDEDVATAAAKVTDVPPAEWVGRPLPSGFDKFGRVLVEAYNRITAPNLDVREFVMTAELSRSPESYTNKRLPHLTVYFKLAMRNEELPSVKERIPYVIVAQTEAAEREAGVVNSMRGTAQNPVVTKTARPQPKRKLLVSDLAEDPTYVSENDVPLNTDYYFSHLLGTISVTFKALFGNDVRTTENLLKRFIPETPHKTPTKTQALLERAGFEKLTPFTPEEESRRILHTVFCTLEAAPHQS.

Disordered regions lie at residues 21 to 43 (GKRPFFRPGSGQTAETERPRPPQ) and 641 to 691 (QADA…KPGV). Residues 646 to 660 (SETSELAMDSQSHAF) show a composition bias toward polar residues.

The protein belongs to the DNA polymerase type-B family. In terms of assembly, forms a complex with the ssDNA-binding protein, the DNA polymerase processivity factor, and the alkaline exonuclease. Interacts with the helicase-primase complex composed of the primase, the helicase and the primase-associated factor; this interaction may coordinate leading and lagging strand DNA synthesis at the replication fork.

Its subcellular location is the host nucleus. It catalyses the reaction DNA(n) + a 2'-deoxyribonucleoside 5'-triphosphate = DNA(n+1) + diphosphate. The enzyme catalyses Endonucleolytic cleavage to 5'-phosphomonoester.. Its function is as follows. Replicates viral genomic DNA. The replication complex is composed of six viral proteins: the DNA polymerase, processivity factor, primase, primase-associated factor, helicase, and ssDNA-binding protein. Additionally, the polymerase contains an intrinsic ribonuclease H (RNase H) activity that specifically degrades RNA/DNA heteroduplexes or duplex DNA substrates in the 5' to 3' direction. Therefore, it can catalyze the excision of the RNA primers that initiate the synthesis of Okazaki fragments at a replication fork during viral DNA replication. This chain is DNA polymerase catalytic subunit, found in Equus caballus (Horse).